The chain runs to 450 residues: Trigger factor (450 aa).

Positions 163–249 constitute a PPIase FKBP-type domain; the sequence is EDFVLIDYQG…LKEIQEQILP (87 aa). Residues 431-443 show a composition bias toward acidic residues; that stretch reads PEVETEVSESAAD. Residues 431–450 form a disordered region; that stretch reads PEVETEVSESAADVEDKTDQ.

This sequence belongs to the FKBP-type PPIase family. Tig subfamily.

The protein localises to the cytoplasm. It catalyses the reaction [protein]-peptidylproline (omega=180) = [protein]-peptidylproline (omega=0). Functionally, involved in protein export. Acts as a chaperone by maintaining the newly synthesized protein in an open conformation. Functions as a peptidyl-prolyl cis-trans isomerase. This Desulforapulum autotrophicum (strain ATCC 43914 / DSM 3382 / VKM B-1955 / HRM2) (Desulfobacterium autotrophicum) protein is Trigger factor.